A 615-amino-acid polypeptide reads, in one-letter code: Elongation factor 4 (615 aa).

The tr-type G domain maps to Ala-17–Val-198. GTP is bound by residues Asp-29–Thr-34 and Asn-145–Asp-148.

This sequence belongs to the TRAFAC class translation factor GTPase superfamily. Classic translation factor GTPase family. LepA subfamily.

Its subcellular location is the cell membrane. The catalysed reaction is GTP + H2O = GDP + phosphate + H(+). Its function is as follows. Required for accurate and efficient protein synthesis under certain stress conditions. May act as a fidelity factor of the translation reaction, by catalyzing a one-codon backward translocation of tRNAs on improperly translocated ribosomes. Back-translocation proceeds from a post-translocation (POST) complex to a pre-translocation (PRE) complex, thus giving elongation factor G a second chance to translocate the tRNAs correctly. Binds to ribosomes in a GTP-dependent manner. In Clavibacter sepedonicus (Clavibacter michiganensis subsp. sepedonicus), this protein is Elongation factor 4.